We begin with the raw amino-acid sequence, 523 residues long: GMP synthase [glutamine-hydrolyzing] (523 aa).

Residues 8-205 form the Glutamine amidotransferase type-1 domain; the sequence is KILILDFGSQ…VVGICGCECK (198 aa). The active-site Nucleophile is Cys85. Catalysis depends on residues His179 and Glu181. Positions 206 to 398 constitute a GMPS ATP-PPase domain; sequence WTAENIIERR…LGLPAEMLNR (193 aa). Residue 233-239 participates in ATP binding; it reads SGGVDSS.

As to quaternary structure, homodimer.

The enzyme catalyses XMP + L-glutamine + ATP + H2O = GMP + L-glutamate + AMP + diphosphate + 2 H(+). It participates in purine metabolism; GMP biosynthesis; GMP from XMP (L-Gln route): step 1/1. Its function is as follows. Catalyzes the synthesis of GMP from XMP. The chain is GMP synthase [glutamine-hydrolyzing] from Actinobacillus pleuropneumoniae serotype 5b (strain L20).